The following is a 513-amino-acid chain: Arabinoxylan arabinofuranohydrolase (513 aa).

Residues 1-26 (MRKKCSVCLWILVLLLSCLSGKSAYA) form the signal peptide. Asp50 serves as the catalytic Proton acceptor. Glu251 functions as the Proton donor in the catalytic mechanism. Asn314 contributes to the substrate binding site. The CBM6 domain occupies 382–511 (NRVEAETFAW…LFNFDYWQFT (130 aa)). Residues Glu385, Glu387, Asn409, Gln410, and Asp506 each coordinate Ca(2+).

It localises to the secreted. The enzyme catalyses Hydrolysis of terminal non-reducing alpha-L-arabinofuranoside residues in alpha-L-arabinosides.. The protein operates within glycan degradation; xylan degradation. Functionally, cleaves arabinose units from O-2- or O-3-monosubstituted xylose residues, thereby assisting in arabinoxylan (AX) and short-chain arabinoxylo-oligosaccharide (AXOS) degradation. Is more active on wheat bran AXOS than on wheat water-extractable AX and rye water-extractable AX. Does not display endoxylanase, xylosidase or arabinanase activity. This Bacillus subtilis (strain 168) protein is Arabinoxylan arabinofuranohydrolase (xynD).